Consider the following 123-residue polypeptide: Holo-[acyl-carrier-protein] synthase (123 aa).

Mg(2+)-binding residues include D8 and E60.

It belongs to the P-Pant transferase superfamily. AcpS family. Mg(2+) serves as cofactor.

It localises to the cytoplasm. It carries out the reaction apo-[ACP] + CoA = holo-[ACP] + adenosine 3',5'-bisphosphate + H(+). Functionally, transfers the 4'-phosphopantetheine moiety from coenzyme A to a Ser of acyl-carrier-protein. This chain is Holo-[acyl-carrier-protein] synthase, found in Wolbachia pipientis wMel.